The chain runs to 69 residues: FMRFamide-like neuropeptides 24 (69 aa).

Residues 1–25 form the signal peptide; it reads MLSSRTSSIILILAILVAIMAVAQC. Residues 26 to 51 constitute a propeptide that is removed on maturation; that stretch reads RNIQYDVEEMTPEAAFRYAQWGEIPH. Phe64 is modified (phenylalanine amide). The propeptide occupies 68–69; sequence SI.

This sequence belongs to the FARP (FMRFamide related peptide) family.

The protein localises to the secreted. In terms of biological role, probable FMRFamide-like neuropeptides. Plays a role in behaviors associated with a sleep-like state induced by stress (SIS), acting in concert with the FMRFamide related peptide flp-13 and neuropeptide-like protein nlp-8. This Caenorhabditis elegans protein is FMRFamide-like neuropeptides 24.